We begin with the raw amino-acid sequence, 271 residues long: Indole-3-glycerol phosphate synthase (271 aa).

The protein belongs to the TrpC family.

It carries out the reaction 1-(2-carboxyphenylamino)-1-deoxy-D-ribulose 5-phosphate + H(+) = (1S,2R)-1-C-(indol-3-yl)glycerol 3-phosphate + CO2 + H2O. It functions in the pathway amino-acid biosynthesis; L-tryptophan biosynthesis; L-tryptophan from chorismate: step 4/5. The sequence is that of Indole-3-glycerol phosphate synthase from Haloarcula marismortui (strain ATCC 43049 / DSM 3752 / JCM 8966 / VKM B-1809) (Halobacterium marismortui).